A 339-amino-acid polypeptide reads, in one-letter code: NADH-quinone oxidoreductase subunit H (339 aa).

Transmembrane regions (helical) follow at residues 9-29, 50-70, 82-102, 115-135, 161-181, 187-207, 235-255, 275-295, and 311-331; these read IFPL…LILC, PNVV…KLLF, ILFI…WAVI, VGVL…IIAG, MGLV…SGII, MPWW…ISVL, MGFA…SAMT, IPGF…FLWI, and GWKV…SVLV.

This sequence belongs to the complex I subunit 1 family. As to quaternary structure, NDH-1 is composed of 14 different subunits. Subunits NuoA, H, J, K, L, M, N constitute the membrane sector of the complex.

It is found in the cell inner membrane. The enzyme catalyses a quinone + NADH + 5 H(+)(in) = a quinol + NAD(+) + 4 H(+)(out). Functionally, NDH-1 shuttles electrons from NADH, via FMN and iron-sulfur (Fe-S) centers, to quinones in the respiratory chain. The immediate electron acceptor for the enzyme in this species is believed to be ubiquinone. Couples the redox reaction to proton translocation (for every two electrons transferred, four hydrogen ions are translocated across the cytoplasmic membrane), and thus conserves the redox energy in a proton gradient. This subunit may bind ubiquinone. The polypeptide is NADH-quinone oxidoreductase subunit H (Rickettsia felis (strain ATCC VR-1525 / URRWXCal2) (Rickettsia azadi)).